The sequence spans 78 residues: Small acidic protein 2 (78 aa).

As to expression, expressed in siliques and anthers.

Its function is as follows. Mediates responses to the synthetic auxin 2,4-dichlorophenoxyacetic acid (2,4-D). Not involved in the response to indole-3-acetic acid (IAA). May interact with RUB modification-related components and may regulate the culling-ring ubiquitin E3 ligase complex (CRL) activity. This chain is Small acidic protein 2 (SMAP2), found in Arabidopsis thaliana (Mouse-ear cress).